The primary structure comprises 237 residues: MNIQHNLNLIQQKIETACKEENRNQNTVKLLAVSKTKPISAILSAYQAGQTAFGENYVQEGVEKIQYFESQGINLEWHFIGPLQSNKTRLVAEHFDWMQTLDRAKIADRLNEQRPTNKAPLNVLIQINISDEESKSGIQPEEMLTLAKHIENLPHLCLRGLMAIPAPTDNIAEQENAFRKMLELFEQLKQVLPNQQIDTLSMGMTDDMPSAIKCGSTMVRIGTAIFGARNYSTSQNK.

Lysine 35 bears the N6-(pyridoxal phosphate)lysine mark.

This sequence belongs to the pyridoxal phosphate-binding protein YggS/PROSC family.

Functionally, pyridoxal 5'-phosphate (PLP)-binding protein, which is involved in PLP homeostasis. This chain is Pyridoxal phosphate homeostasis protein, found in Haemophilus influenzae (strain ATCC 51907 / DSM 11121 / KW20 / Rd).